The following is a 140-amino-acid chain: Envelope protein A28 homolog (140 aa).

The helical; Signal-anchor for type II membrane protein transmembrane segment at M1–F21 threads the bilayer. The Virion surface portion of the chain corresponds to Q22–F140.

The protein belongs to the poxviridae A28 protein family. Contains two intramolecular disulfide bonds. They are created by the viral disulfide bond formation pathway, a poxvirus-specific pathway that operates on the cytoplasmic side of the MV membranes.

Its subcellular location is the virion membrane. Functionally, envelope protein required for virus entry into host cell and for cell-cell fusion (syncytium formation). The protein is Envelope protein A28 homolog of Bos taurus (Bovine).